The primary structure comprises 205 residues: Glycerol-3-phosphate acyltransferase (205 aa).

Topologically, residues 1–3 (MSA) are periplasmic. A helical membrane pass occupies residues 4 to 24 (IAPGMILFAYLCGSISSAILV). Over 25–52 (CRIAGLPDPRESGSGNPGATNVLRIGGK) the chain is Cytoplasmic. Residues 53–73 (GAAVAVLIFDILKGMLPVWGA) traverse the membrane as a helical segment. Residues 74–80 (YALGVTP) are Periplasmic-facing. A helical membrane pass occupies residues 81–101 (FWLGLIAIAACLGHIWPVFFG). The Cytoplasmic segment spans residues 102-111 (FKGGKGVATA). The chain crosses the membrane as a helical span at residues 112-132 (FGAIAPIGWDLTGVMAGTWLL). Residues 133 to 137 (TVLLS) lie on the Periplasmic side of the membrane. The chain crosses the membrane as a helical span at residues 138–158 (GYSSLGAIVSALIAPFYVWWF). The Cytoplasmic segment spans residues 159–205 (KPQFTFPVSMLSCLILLRHHDNIQRLWRRQETKIWTKLKKKRQKDSE).

The protein belongs to the PlsY family. As to quaternary structure, probably interacts with PlsX.

The protein resides in the cell inner membrane. It carries out the reaction sn-glycerol 3-phosphate + an acyl-CoA = a 1-acyl-sn-glycero-3-phosphate + CoA. The catalysed reaction is a fatty acyl-[ACP] + sn-glycerol 3-phosphate = a 1-acyl-sn-glycero-3-phosphate + holo-[ACP]. Its pathway is lipid metabolism; phospholipid metabolism. Catalyzes the transfer of an acyl group from acyl-ACP to glycerol-3-phosphate (G3P) to form lysophosphatidic acid (LPA). This enzyme can also utilize acyl-CoA as fatty acyl donor, but not acyl-PO(4). The protein is Glycerol-3-phosphate acyltransferase of Salmonella schwarzengrund (strain CVM19633).